The following is a 477-amino-acid chain: Salivary plasminogen activator alpha 1 (477 aa).

A signal peptide spans M1–R36. A Fibronectin type-I domain is found at V40–V82. Disulfide bonds link C42-C72, C70-C79, C87-C98, C92-C109, C111-C120, C128-C209, C149-C191, C180-C204, C214-C345, C257-C273, C265-C334, C359-C434, C391-C407, and C424-C452. Positions P83–E121 constitute an EGF-like domain. The region spanning C128 to C209 is the Kringle domain. Residue N153 is glycosylated (N-linked (GlcNAc...) asparagine). Residues S226–H476 form the Peptidase S1 domain. Residues H272 and D321 each act as charge relay system in the active site. The N-linked (GlcNAc...) asparagine glycan is linked to N398. S428 serves as the catalytic Charge relay system.

It belongs to the peptidase S1 family. Monomer.

Its subcellular location is the secreted. It catalyses the reaction Specific cleavage of Arg-|-Val bond in plasminogen to form plasmin.. Its activity is regulated as follows. Activity toward plasminogen is stimulated in the presence of fibrin I. Probably essential to support the feeding habits of this exclusively haematophagous animal. Potent thrombolytic agent. The sequence is that of Salivary plasminogen activator alpha 1 from Desmodus rotundus (Vampire bat).